The primary structure comprises 612 residues: Coagulation factor XII (612 aa).

An N-terminal signal peptide occupies residues 1 to 19 (MRALLLLGALLVSLESTVS). The Fibronectin type-II domain maps to 42–90 (VTGEPCHFPFQYHRQLHHKCIHRGRPGPRPWCATTPNFEKDQRWAYCLE). Intrachain disulfides connect cysteine 47/cysteine 73, cysteine 61/cysteine 88, cysteine 98/cysteine 110, cysteine 104/cysteine 119, cysteine 121/cysteine 130, cysteine 135/cysteine 163, cysteine 161/cysteine 170, cysteine 178/cysteine 189, cysteine 183/cysteine 198, cysteine 200/cysteine 209, cysteine 217/cysteine 306, cysteine 240/cysteine 288, cysteine 268/cysteine 301, cysteine 355/cysteine 482, cysteine 393/cysteine 409, cysteine 401/cysteine 471, cysteine 432/cysteine 435, cysteine 498/cysteine 566, cysteine 529/cysteine 545, and cysteine 556/cysteine 587. In terms of domain architecture, EGF-like 1 spans 94–131 (VKDHCSKHNPCQKGGTCVNMPDGPRCICADHFTGKHCQ). O-linked (Fuc) threonine glycosylation is present at threonine 109. Residues 133–173 (EKCFEPQFFRFFHENEIWHRLEPAGVVKCQCKGPNAQCKPL) form the Fibronectin type-I domain. Positions 174 to 210 (ASQVCRTNPCLNGGSCLQAEGHRLCRCAPSFAGRLCD) constitute an EGF-like 2 domain. Residues 217–306 (CYDDRDRGLS…SWNYCRLAPC (90 aa)) enclose the Kringle domain. N-linked (GlcNAc...) asparagine glycans are attached at residues asparagine 251 and asparagine 282. One can recognise a Peptidase S1 domain in the interval 369–611 (VVGGLVALPG…YLAWIREHTA (243 aa)). Residue histidine 408 is the Charge relay system of the active site. Asparagine 429 carries an N-linked (GlcNAc...) asparagine glycan. Aspartate 457 functions as the Charge relay system in the catalytic mechanism. Residue serine 560 is the Charge relay system of the active site.

It belongs to the peptidase S1 family. As to quaternary structure, interacts with HRG; the interaction, which is enhanced in the presence of zinc ions and inhibited by heparin-binding, inhibits factor XII autoactivation and contact-initiated coagulation. Post-translationally, O- and N-glycosylated.

The protein resides in the secreted. It catalyses the reaction Selective cleavage of Arg-|-Ile bonds in factor VII to form factor VIIa and factor XI to form factor XIa.. With respect to regulation, activity is promoted in the presence of negatively charged surfaces. In terms of biological role, factor XII is a serum glycoprotein that participates in the initiation of blood coagulation, fibrinolysis, and the generation of bradykinin and angiotensin. Prekallikrein is cleaved by factor XII to form kallikrein, which then cleaves factor XII first to alpha-factor XIIa and then to beta-factor XIIa. Alpha-factor XIIa activates factor XI to factor XIa. In Bos taurus (Bovine), this protein is Coagulation factor XII (F12).